The primary structure comprises 579 residues: Nif-specific regulatory protein (579 aa).

The GAF domain occupies 40–187 (DPVAEVPQIF…MVASLLEQAL (148 aa)). Residues 226–454 (IVGSSPAIAE…LENCVNRAAA (229 aa)) form the Sigma-54 factor interaction domain. ATP-binding positions include 254-261 (GESGTGKE) and 317-326 (ADGGTLFLDE). Residues 464-536 (EELACRQGAC…PLRTKTAQLS (73 aa)) are inter-domain linker. A divalent metal cation-binding residues include C468 and C473. The disordered stretch occupies residues 502-529 (RVSAPPPEPAPAPEPAPEAPPREEVPLR). 7 repeat units span residues 505–506 (AP), 507–508 (PP), 509–510 (EP), 511–512 (AP), 513–514 (AP), 515–516 (EP), and 517–518 (AP). The segment at 505–518 (APPPEPAPAPEPAP) is 7 X 2 AA tandem repeats of X-P. Positions 505–520 (APPPEPAPAPEPAPEA) are enriched in pro residues. Residues 537–579 (REELLRALESAGWVQAKAARLLGMTPRQIAYALQKFEIELRKI) form a C-terminal DNA-binding domain region. A DNA-binding region (H-T-H motif) is located at residues 551-570 (QAKAARLLGMTPRQIAYALQ).

Interacts with sigma-54.

Functionally, required for activation of most nif operons, which are directly involved in nitrogen fixation. The chain is Nif-specific regulatory protein (nifA1) from Rhodobacter capsulatus (Rhodopseudomonas capsulata).